Here is a 47-residue protein sequence, read N- to C-terminus: Protein RL9A (47 aa).

The chain crosses the membrane as a helical span at residues Cys-27–Leu-47.

It is found in the host membrane. This is Protein RL9A (RL9A) from Human cytomegalovirus (strain Merlin) (HHV-5).